The sequence spans 365 residues: Alanine racemase (365 aa).

The active-site Proton acceptor; specific for D-alanine is Lys-32. The residue at position 32 (Lys-32) is an N6-(pyridoxal phosphate)lysine. Arg-128 provides a ligand contact to substrate. Residue Tyr-257 is the Proton acceptor; specific for L-alanine of the active site. Position 305 (Met-305) interacts with substrate.

The protein belongs to the alanine racemase family. It depends on pyridoxal 5'-phosphate as a cofactor.

The enzyme catalyses L-alanine = D-alanine. It functions in the pathway amino-acid biosynthesis; D-alanine biosynthesis; D-alanine from L-alanine: step 1/1. Its function is as follows. Catalyzes the interconversion of L-alanine and D-alanine. May also act on other amino acids. This Francisella tularensis subsp. tularensis (strain SCHU S4 / Schu 4) protein is Alanine racemase (alr).